Here is a 329-residue protein sequence, read N- to C-terminus: GTP 3',8-cyclase (329 aa).

The Radical SAM core domain occupies 8 to 234; it reads AFARKFYYLR…QIRQRSDGPA (227 aa). GTP is bound at residue Arg17. Cys24 and Cys28 together coordinate [4Fe-4S] cluster. Position 30 (Tyr30) interacts with S-adenosyl-L-methionine. Cys31 contacts [4Fe-4S] cluster. Residue Arg68 coordinates GTP. Gly72 serves as a coordination point for S-adenosyl-L-methionine. Thr99 provides a ligand contact to GTP. Ser123 contacts S-adenosyl-L-methionine. Lys160 is a binding site for GTP. Met194 contacts S-adenosyl-L-methionine. [4Fe-4S] cluster contacts are provided by Cys257 and Cys260. 262–264 is a GTP binding site; sequence RLR. Cys274 is a binding site for [4Fe-4S] cluster.

It belongs to the radical SAM superfamily. MoaA family. Monomer and homodimer. [4Fe-4S] cluster is required as a cofactor.

It carries out the reaction GTP + AH2 + S-adenosyl-L-methionine = (8S)-3',8-cyclo-7,8-dihydroguanosine 5'-triphosphate + 5'-deoxyadenosine + L-methionine + A + H(+). The protein operates within cofactor biosynthesis; molybdopterin biosynthesis. Functionally, catalyzes the cyclization of GTP to (8S)-3',8-cyclo-7,8-dihydroguanosine 5'-triphosphate. This is GTP 3',8-cyclase from Klebsiella pneumoniae subsp. pneumoniae (strain ATCC 700721 / MGH 78578).